The chain runs to 1116 residues: DNA-directed RNA polymerase subunit beta (1116 aa).

A compositionally biased stretch (basic and acidic residues) spans Lys1070–Lys1100. Positions Lys1070 to Lys1116 are disordered. Residues Gln1101 to Lys1116 show a composition bias toward basic residues.

The protein belongs to the RNA polymerase beta chain family. In plastids the minimal PEP RNA polymerase catalytic core is composed of four subunits: alpha, beta, beta', and beta''. When a (nuclear-encoded) sigma factor is associated with the core the holoenzyme is formed, which can initiate transcription.

The protein resides in the plastid. It localises to the chloroplast. It carries out the reaction RNA(n) + a ribonucleoside 5'-triphosphate = RNA(n+1) + diphosphate. In terms of biological role, DNA-dependent RNA polymerase catalyzes the transcription of DNA into RNA using the four ribonucleoside triphosphates as substrates. In Heterosigma akashiwo (Chromophytic alga), this protein is DNA-directed RNA polymerase subunit beta.